Consider the following 238-residue polypeptide: Dolichyldiphosphatase 1 (238 aa).

The next 4 helical transmembrane spans lie at Leu33–Phe53, Pro100–Leu120, Phe130–Val150, and Trp162–Phe182.

The protein belongs to the dolichyldiphosphatase family.

Its subcellular location is the endoplasmic reticulum membrane. The catalysed reaction is a di-trans,poly-cis-dolichyl diphosphate + H2O = a di-trans,poly-cis-dolichyl phosphate + phosphate + H(+). The protein operates within protein modification; protein glycosylation. In terms of biological role, required for efficient N-glycosylation. Necessary for maintaining optimal levels of dolichol-linked oligosaccharides. Hydrolyzes dolichyl pyrophosphate at a very high rate and dolichyl monophosphate at a much lower rate. Does not act on phosphatidate. The protein is Dolichyldiphosphatase 1 (DOLPP1) of Homo sapiens (Human).